The primary structure comprises 335 residues: Putative D-threonate 4-phosphate dehydrogenase (335 aa).

Positions 140 and 141 each coordinate substrate. Positions 170, 214, and 269 each coordinate a divalent metal cation. Residues Lys277 and Arg295 each coordinate substrate.

The protein belongs to the PdxA family. PdxA2 subfamily. In terms of assembly, homodimer. A divalent metal cation serves as cofactor.

It carries out the reaction 4-O-phospho-D-threonate + NAD(+) = dihydroxyacetone phosphate + CO2 + NADH. Functionally, catalyzes the NAD-dependent oxidation and subsequent decarboxylation of D-threonate 4-phosphate to produce dihydroxyacetone phosphate (DHAP). This chain is Putative D-threonate 4-phosphate dehydrogenase, found in Symbiobacterium thermophilum (strain DSM 24528 / JCM 14929 / IAM 14863 / T).